Consider the following 389-residue polypeptide: Chalcone synthase (389 aa).

C164 is a catalytic residue.

The protein belongs to the thiolase-like superfamily. Chalcone/stilbene synthases family.

It carries out the reaction (E)-4-coumaroyl-CoA + 3 malonyl-CoA + 3 H(+) = 2',4,4',6'-tetrahydroxychalcone + 3 CO2 + 4 CoA. It functions in the pathway secondary metabolite biosynthesis; flavonoid biosynthesis. Its function is as follows. The primary product of this enzyme is 4,2',4',6'-tetrahydroxychalcone (also termed naringenin-chalcone or chalcone) which can under specific conditions spontaneously isomerize into naringenin. In Catharanthus roseus (Madagascar periwinkle), this protein is Chalcone synthase (CHS).